The following is a 2327-amino-acid chain: Kielin/chordin-like protein (2327 aa).

The first 19 residues, 1–19 (MNTLLWTILLPLLFSFCVC), serve as a signal peptide directing secretion. Residues 250-294 (LPLPYSLSGERQMEDEEIQREPRAPDLSDTDHYQQQQSEVPAQLL) form a disordered region. Basic and acidic residues predominate over residues 268–281 (QREPRAPDLSDTDH). Residues 291–332 (AQLLAKDDRLQRLEEAVKGLTNMIDMIKSQNADLQARVIALE) adopt a coiled-coil conformation. VWFC domains lie at 339 to 400 (STCV…SVGP), 401 to 438 (CMSCICQSGEVSCTPKLCPPVTCSDPVTLPNECCPLCA), 439 to 493 (TGCS…AKCQ), 494 to 553 (QGCE…PSCP), 554 to 610 (VCEL…LDCS), 611 to 669 (ACEM…SQCQ), 670 to 728 (SCMD…PMCD), 729 to 786 (GCLY…PRCE), 787 to 847 (GCEY…PSCD), 848 to 907 (VCDF…PVCK), 908 to 966 (VCVQ…PVCD), 967 to 1025 (SCSY…AKCP), 1026 to 1083 (DCRY…NNCN), 1084 to 1142 (GCNY…PQCP), 1146 to 1203 (ADCP…RSCD), 1204 to 1260 (GCLM…KECQ), 1261 to 1319 (DCQY…PVCD), 1321 to 1377 (CSYN…CPIC), 1378 to 1439 (QGCH…DGCN), 1440 to 1495 (YSGR…PRCT), 1496 to 1555 (GICK…PVCD), 1556 to 1614 (RCFY…RECP), 1615 to 1673 (VCRY…PRCR), 1674 to 1731 (GCVY…PVCA), 1732 to 1799 (DCIS…SSCA), 1800 to 1860 (QALS…PVCN), 1861 to 1924 (ECVV…HECQ), and 1928 to 1988 (VSCW…PHCI). The 177-residue stretch at 1992–2168 (ATCIAFGDPH…SSNDSSSSCW (177 aa)) folds into the VWFD domain. 2 cysteine pairs are disulfide-bonded: Cys-1994-Cys-2126 and Cys-2016-Cys-2167. Positions 2259-2319 (CPHDRGYVFD…ESHCIPPESC (61 aa)) constitute a TIL domain.

Its subcellular location is the secreted. May be a signaling molecule that mediates inductive activities of the embryonic midline. Able to dorsalize mesoderm. This chain is Kielin/chordin-like protein (kcp), found in Xenopus laevis (African clawed frog).